A 102-amino-acid chain; its full sequence is Protein CASC2, isoform 3 (102 aa).

In terms of tissue distribution, expressed in normal and neoplastic endometrial tissues.

In terms of biological role, may act as a potential tumor suppressor. The polypeptide is Protein CASC2, isoform 3 (CASC2) (Homo sapiens (Human)).